Reading from the N-terminus, the 486-residue chain is UDP-N-acetylmuramate--L-alanine ligase (486 aa).

Position 132–138 (132–138 (GTHGKTT)) interacts with ATP.

It belongs to the MurCDEF family.

The protein resides in the cytoplasm. It catalyses the reaction UDP-N-acetyl-alpha-D-muramate + L-alanine + ATP = UDP-N-acetyl-alpha-D-muramoyl-L-alanine + ADP + phosphate + H(+). It participates in cell wall biogenesis; peptidoglycan biosynthesis. Cell wall formation. The polypeptide is UDP-N-acetylmuramate--L-alanine ligase (Halorhodospira halophila (strain DSM 244 / SL1) (Ectothiorhodospira halophila (strain DSM 244 / SL1))).